The sequence spans 255 residues: MALPDFSMRQLLEAGVHFGHQTHRWNPKMKPYIFGDRNNIHIIDLAQTVPMLSRALQVVSDTVARGGRVLFVGTKRQASEIIADSAKRSAQYYVNSRWLGGMMTNWKTISNSIQRLRKLDEILGGEAQGFTKKERLNLEREREKLDKALGGIRDMGGTPDLMFIIDTNKEKIAIDEAKRLGIPVVAIIDSNCDPDLIDYPIPGNDDASRAIALYCELISRAAIDGIARQQSSSGRDLGASSEVPVEPALEEAAEG.

The segment at 230–255 (QSSSGRDLGASSEVPVEPALEEAAEG) is disordered.

The protein belongs to the universal ribosomal protein uS2 family.

The protein is Small ribosomal subunit protein uS2 of Rhizobium etli (strain CIAT 652).